Here is a 134-residue protein sequence, read N- to C-terminus: MKPSERRKARRLAVQAIYSWQLSGNNIADVEHEFLTEQSLDGVDVAYFRELFAGVATKKTQLDELIIPHLDRPIDEVSPVEKAIVRLAAYELTFRKDVPFKVAINEAIELAKAFGADESHKFVNGLLDKLVARK.

Belongs to the NusB family.

Involved in transcription antitermination. Required for transcription of ribosomal RNA (rRNA) genes. Binds specifically to the boxA antiterminator sequence of the ribosomal RNA (rrn) operons. The chain is Transcription antitermination protein NusB from Shewanella oneidensis (strain ATCC 700550 / JCM 31522 / CIP 106686 / LMG 19005 / NCIMB 14063 / MR-1).